A 97-amino-acid chain; its full sequence is Large ribosomal subunit protein bL28 (97 aa).

This sequence belongs to the bacterial ribosomal protein bL28 family.

The sequence is that of Large ribosomal subunit protein bL28 from Brucella abortus (strain S19).